The following is a 1293-amino-acid chain: Phosphoribosylformylglycinamidine synthase (1293 aa).

Residues 305–316 and Ala676 contribute to the ATP site; that span reads GAATGSGGEIRD. Residues 305–327 are disordered; sequence GAATGSGGEIRDEGATGRGSKPK. Mg(2+) contacts are provided by Asp677, Glu716, Asn720, and Asp884. An ATP-binding site is contributed by Ser886. Residues 1040-1293 form the Glutamine amidotransferase type-1 domain; sequence MAILREQGVN…MFRNARVNLG (254 aa). Residue Cys1133 is the Nucleophile of the active site. Catalysis depends on residues His1258 and Glu1260.

The protein in the N-terminal section; belongs to the FGAMS family. As to quaternary structure, monomer.

It localises to the cytoplasm. It catalyses the reaction N(2)-formyl-N(1)-(5-phospho-beta-D-ribosyl)glycinamide + L-glutamine + ATP + H2O = 2-formamido-N(1)-(5-O-phospho-beta-D-ribosyl)acetamidine + L-glutamate + ADP + phosphate + H(+). The protein operates within purine metabolism; IMP biosynthesis via de novo pathway; 5-amino-1-(5-phospho-D-ribosyl)imidazole from N(2)-formyl-N(1)-(5-phospho-D-ribosyl)glycinamide: step 1/2. Functionally, phosphoribosylformylglycinamidine synthase involved in the purines biosynthetic pathway. Catalyzes the ATP-dependent conversion of formylglycinamide ribonucleotide (FGAR) and glutamine to yield formylglycinamidine ribonucleotide (FGAM) and glutamate. In Shewanella sp. (strain MR-4), this protein is Phosphoribosylformylglycinamidine synthase.